A 900-amino-acid polypeptide reads, in one-letter code: Alanine--tRNA ligase (900 aa).

The Zn(2+) site is built by His-604, His-608, Cys-708, and His-712.

The protein belongs to the class-II aminoacyl-tRNA synthetase family. Zn(2+) serves as cofactor.

The protein localises to the cytoplasm. The enzyme catalyses tRNA(Ala) + L-alanine + ATP = L-alanyl-tRNA(Ala) + AMP + diphosphate. Catalyzes the attachment of alanine to tRNA(Ala) in a two-step reaction: alanine is first activated by ATP to form Ala-AMP and then transferred to the acceptor end of tRNA(Ala). Also edits incorrectly charged Ser-tRNA(Ala) and Gly-tRNA(Ala) via its editing domain. This Saccharolobus islandicus (strain M.14.25 / Kamchatka #1) (Sulfolobus islandicus) protein is Alanine--tRNA ligase.